The sequence spans 181 residues: Ribulose bisphosphate carboxylase small subunit, chloroplastic 1 (181 aa).

The transit peptide at 1 to 54 (MASSMLSSAAVVTSPAQATMVAPFTGLKSSSAFPVTRKANNDITSIVSNGGRVS) directs the protein to the chloroplast.

Belongs to the RuBisCO small chain family. In terms of assembly, heterohexadecamer of 8 large and 8 small subunits.

Its subcellular location is the plastid. The protein resides in the chloroplast. Functionally, ruBisCO catalyzes two reactions: the carboxylation of D-ribulose 1,5-bisphosphate, the primary event in carbon dioxide fixation, as well as the oxidative fragmentation of the pentose substrate. Both reactions occur simultaneously and in competition at the same active site. Although the small subunit is not catalytic it is essential for maximal activity. The sequence is that of Ribulose bisphosphate carboxylase small subunit, chloroplastic 1 from Brassica napus (Rape).